The sequence spans 870 residues: MYDKNLEKEYYQICEERGYFEIDGNKTIQEKDKNFCIMMPPPNVTGVLHIGHALTFTLQDIMTRYKRMDGYKVLYQPGLDHAGIATQNVVEKQLLTQGIKKEELGREEFIEKVWEWKEQSGGKILDQMRTLGITPAWSRLRFTMDEGLVNAVKKAFVELYDKRLIVRGNYMINWCTHDGALSDIEVEYKENKGKLYHIKYFLKDSDEFLVVATTRPETFFGDTAVMVHPDDERYAKFVDKEVILPISKKAIKIIADKHVEKEFGTGVVKVTPAHDMNDYEVGLRHNLDFISVFDEKGILNEHCLEFQGLERLEAREKIVAKLESLGFIEKIEEYNNQIGYCYRCNNIVEPYISKQWFVKKEIAQESIEKVALGESKFYPNHWINSFNAWMKDLRDWCISRQLWWGHQIPVYYCECSHEWASQHTPKTCPKCQSQNFKQDEDVLDTWFSSGLWAMSTLGWGNENWGKDKIWSEKDLKDFYPNSLLITGFDILFFWVARMMFQSTNVLHQLPFKDIYLHALVKDEQGRKMSKSLGNVIDPNESIKEYSADILRFTLALLAIQGRDIKLSNDKLLQVRNFTNKIYNAKNYLLLNESKFEDLENITLHSELAKYIYAKFQTCVKDVRENLDNYRFNDAANTLYKFFWDDFCDWGIELSKAEKSSVKELGSIFKEALKLLNPFMPFISEYLYHKLSDTELKTSPSIMISKYPKFKEQDKNIEKIFSLLIESIVSIRRAKSLIDLGNSKIEKAYIKFNDKKIKDEIKAYMNFIIMLAKCEQIEFSEEKLPKAICDVSENLEIFITLENVDLSGILTRLENQKNKLEKESFKLNSMLSNEKFIANAPKEVVEQNKEALENLKIQLEKISVELQNLRG.

The 'HIGH' region signature appears at 42–52 (PNVTGVLHIGH). A 'KMSKS' region motif is present at residues 527–531 (KMSKS). ATP is bound at residue K530. Residues 800–870 (LENVDLSGIL…ISVELQNLRG (71 aa)) are a coiled coil.

Belongs to the class-I aminoacyl-tRNA synthetase family. ValS type 1 subfamily. As to quaternary structure, monomer.

It is found in the cytoplasm. The enzyme catalyses tRNA(Val) + L-valine + ATP = L-valyl-tRNA(Val) + AMP + diphosphate. Catalyzes the attachment of valine to tRNA(Val). As ValRS can inadvertently accommodate and process structurally similar amino acids such as threonine, to avoid such errors, it has a 'posttransfer' editing activity that hydrolyzes mischarged Thr-tRNA(Val) in a tRNA-dependent manner. In Campylobacter jejuni subsp. jejuni serotype O:2 (strain ATCC 700819 / NCTC 11168), this protein is Valine--tRNA ligase.